Reading from the N-terminus, the 311-residue chain is Homoserine kinase (311 aa).

An ATP-binding site is contributed by 88 to 98; that stretch reads PEGLGLGSSGA.

The protein belongs to the GHMP kinase family. Homoserine kinase subfamily.

It localises to the cytoplasm. The catalysed reaction is L-homoserine + ATP = O-phospho-L-homoserine + ADP + H(+). It functions in the pathway amino-acid biosynthesis; L-threonine biosynthesis; L-threonine from L-aspartate: step 4/5. Functionally, catalyzes the ATP-dependent phosphorylation of L-homoserine to L-homoserine phosphate. In Saccharolobus islandicus (strain Y.N.15.51 / Yellowstone #2) (Sulfolobus islandicus), this protein is Homoserine kinase.